The sequence spans 210 residues: 7-carboxy-7-deazaguanine synthase (210 aa).

Substrate-binding positions include L12–G14 and R27. Positions Q18–P210 constitute a Radical SAM core domain. 3 residues coordinate [4Fe-4S] cluster: C31, C46, and C49. T51 lines the Mg(2+) pocket. Residue T90 participates in substrate binding. Residues G92, S133–K135, and Q173–D176 contribute to the S-adenosyl-L-methionine site. A substrate-binding site is contributed by P210.

It belongs to the radical SAM superfamily. 7-carboxy-7-deazaguanine synthase family. In terms of assembly, homodimer. Requires [4Fe-4S] cluster as cofactor. S-adenosyl-L-methionine serves as cofactor. The cofactor is Mg(2+).

It carries out the reaction 6-carboxy-5,6,7,8-tetrahydropterin + H(+) = 7-carboxy-7-deazaguanine + NH4(+). It functions in the pathway purine metabolism; 7-cyano-7-deazaguanine biosynthesis. In terms of biological role, catalyzes the complex heterocyclic radical-mediated conversion of 6-carboxy-5,6,7,8-tetrahydropterin (CPH4) to 7-carboxy-7-deazaguanine (CDG), a step common to the biosynthetic pathways of all 7-deazapurine-containing compounds. The chain is 7-carboxy-7-deazaguanine synthase from Bordetella pertussis (strain Tohama I / ATCC BAA-589 / NCTC 13251).